A 399-amino-acid chain; its full sequence is ATP-dependent RNA helicase fal1 (399 aa).

A Q motif motif is present at residues 25–53 (PTFQDMHLKENLLRGIYAYGYESPSAVQS). A Helicase ATP-binding domain is found at 56–226 (IVQICKGRDT…TKFMTDPVRI (171 aa)). Residue 69 to 76 (AQSGTGKT) participates in ATP binding. The short motif at 174–177 (DEAD) is the DEAD box element. The Helicase C-terminal domain occupies 237 to 398 (GLKQYFIAVE…EMPMNVADLL (162 aa)).

The protein belongs to the DEAD box helicase family. DDX48/FAL1 subfamily.

It is found in the nucleus. The protein resides in the nucleolus. It carries out the reaction ATP + H2O = ADP + phosphate + H(+). Functionally, ATP-dependent RNA helicase involved in 40S ribosomal subunit biogenesis. Required for the processing and cleavage of 35S pre-rRNA at sites A0, A1, and A2, leading to mature 18S rRNA. This chain is ATP-dependent RNA helicase fal1 (fal1), found in Botryotinia fuckeliana (strain B05.10) (Noble rot fungus).